A 73-amino-acid polypeptide reads, in one-letter code: Putative defensin-like protein 33 (73 aa).

The N-terminal stretch at 1-25 is a signal peptide; it reads MASNKVSFIFILFLCVLSTAEFGEA. Cystine bridges form between cysteine 33/cysteine 59, cysteine 45/cysteine 68, and cysteine 49/cysteine 70.

The protein belongs to the DEFL family.

It localises to the secreted. The protein is Putative defensin-like protein 33 of Arabidopsis thaliana (Mouse-ear cress).